The following is a 71-amino-acid chain: Protein KleB (71 aa).

Positions 9-28 form a DNA-binding region, H-T-H motif; it reads VTTNCRRCGKSISTLSRSLI.

This is Protein KleB (kleB) from Escherichia coli.